A 487-amino-acid polypeptide reads, in one-letter code: Reticulon-like protein B21 (487 aa).

Residues 1–22 (MTPRRSLSSSDSNDKSPSVSVV) are compositionally biased toward low complexity. Disordered stretches follow at residues 1 to 43 (MTPR…PGRV), 65 to 86 (LRKV…TEQE), and 113 to 149 (KSNE…EKKS). The segment covering 26–38 (ARSESVEGIEKKT) has biased composition (basic and acidic residues). Acidic residues predominate over residues 118-143 (EQIDNGDQEIGDQDDYEEDGDEEEER). The region spanning 230–419 (LVDLVMWRDV…FTLVWNLSSV (190 aa)) is the Reticulon domain. 4 helical membrane-spanning segments follow: residues 242–262 (STLV…ANDL), 264–284 (FSFI…MFVL), 354–374 (ITLW…PKIF), and 413–433 (VWNL…LVAF). A compositionally biased stretch (acidic residues) spans 446-463 (QADDDEDDNEEEEAEEEK). The interval 446-487 (QADDDEDDNEEEEAEEEKEQVPPKHKRAPPHMMMPNKLKKIS) is disordered.

It is found in the endoplasmic reticulum membrane. The polypeptide is Reticulon-like protein B21 (RTNLB21) (Arabidopsis thaliana (Mouse-ear cress)).